The sequence spans 155 residues: Cardioactive peptide (155 aa).

The N-terminal stretch at 1–23 (MRTSMRISLRLLALLACAICSQA) is a signal peptide. Positions 24–49 (SLERENNEGTNMANHKLSGVIQWKYE) are excised as a propeptide. The cysteines at positions 54 and 60 are disulfide-linked. Cysteine 60 carries the cysteine amide modification. The propeptide occupies 64-155 (RTYPSYPPFS…MQQLEERESK (92 aa)). Residues 135 to 155 (NKQKMLQNEKEMQQLEERESK) are disordered. A compositionally biased stretch (basic and acidic residues) spans 141–155 (QNEKEMQQLEERESK).

As to expression, central nervous system; most neurons exhibit coexpression with Burs.

The protein localises to the secreted. Its function is as follows. Cardioregulatory neurohormone that increases heart beat rate during adult wing inflation; has no effect on beat amplitude. The effect of CCAP is both ino- and chronotropic. The polypeptide is Cardioactive peptide (Drosophila melanogaster (Fruit fly)).